The sequence spans 236 residues: tRNA (guanine-N(1)-)-methyltransferase (236 aa).

S-adenosyl-L-methionine is bound by residues glycine 116 and 136–141; that span reads LGDFVL.

Belongs to the RNA methyltransferase TrmD family. In terms of assembly, homodimer.

The protein resides in the cytoplasm. The enzyme catalyses guanosine(37) in tRNA + S-adenosyl-L-methionine = N(1)-methylguanosine(37) in tRNA + S-adenosyl-L-homocysteine + H(+). Specifically methylates guanosine-37 in various tRNAs. This is tRNA (guanine-N(1)-)-methyltransferase from Thiobacillus denitrificans (strain ATCC 25259 / T1).